A 108-amino-acid polypeptide reads, in one-letter code: Large ribosomal subunit protein uL24 (108 aa).

It belongs to the universal ribosomal protein uL24 family. In terms of assembly, part of the 50S ribosomal subunit.

Functionally, one of two assembly initiator proteins, it binds directly to the 5'-end of the 23S rRNA, where it nucleates assembly of the 50S subunit. One of the proteins that surrounds the polypeptide exit tunnel on the outside of the subunit. In Geotalea daltonii (strain DSM 22248 / JCM 15807 / FRC-32) (Geobacter daltonii), this protein is Large ribosomal subunit protein uL24.